Reading from the N-terminus, the 193-residue chain is Oligoribonuclease (193 aa).

The Exonuclease domain occupies 14-177 (LIWIDLEMTG…SDIYDSIAEL (164 aa)). Tyr135 is a catalytic residue.

This sequence belongs to the oligoribonuclease family.

Its subcellular location is the cytoplasm. In terms of biological role, 3'-to-5' exoribonuclease specific for small oligoribonucleotides. The sequence is that of Oligoribonuclease from Xylella fastidiosa (strain Temecula1 / ATCC 700964).